The sequence spans 193 residues: Ribosomal RNA small subunit methyltransferase G (193 aa).

S-adenosyl-L-methionine contacts are provided by residues Gly-72, Phe-77, 123 to 124 (IE), and Arg-137.

It belongs to the methyltransferase superfamily. RNA methyltransferase RsmG family.

It is found in the cytoplasm. The enzyme catalyses guanosine(527) in 16S rRNA + S-adenosyl-L-methionine = N(7)-methylguanosine(527) in 16S rRNA + S-adenosyl-L-homocysteine. Functionally, specifically methylates the N7 position of guanine in position 527 of 16S rRNA. In Wolinella succinogenes (strain ATCC 29543 / DSM 1740 / CCUG 13145 / JCM 31913 / LMG 7466 / NCTC 11488 / FDC 602W) (Vibrio succinogenes), this protein is Ribosomal RNA small subunit methyltransferase G.